The primary structure comprises 181 residues: Large ribosomal subunit protein uL5 (181 aa).

This sequence belongs to the universal ribosomal protein uL5 family. As to quaternary structure, part of the 50S ribosomal subunit; part of the 5S rRNA/L5/L18/L25 subcomplex. Contacts the 5S rRNA and the P site tRNA. Forms a bridge to the 30S subunit in the 70S ribosome.

Its function is as follows. This is one of the proteins that bind and probably mediate the attachment of the 5S RNA into the large ribosomal subunit, where it forms part of the central protuberance. In the 70S ribosome it contacts protein S13 of the 30S subunit (bridge B1b), connecting the 2 subunits; this bridge is implicated in subunit movement. Contacts the P site tRNA; the 5S rRNA and some of its associated proteins might help stabilize positioning of ribosome-bound tRNAs. In Thermosipho africanus (strain TCF52B), this protein is Large ribosomal subunit protein uL5.